Here is a 439-residue protein sequence, read N- to C-terminus: tRNA modification GTPase MnmE (439 aa).

(6S)-5-formyl-5,6,7,8-tetrahydrofolate-binding residues include arginine 20, glutamate 78, and lysine 116. Positions 211 to 364 (GIYVAILGEP…LLSAIQKKVE (154 aa)) constitute a TrmE-type G domain. GTP contacts are provided by residues 221–226 (NSGKST), 240–246 (SEYAGTT), and 265–268 (DTAG). Residues serine 225 and threonine 246 each contribute to the Mg(2+) site. Lysine 439 is a binding site for (6S)-5-formyl-5,6,7,8-tetrahydrofolate.

This sequence belongs to the TRAFAC class TrmE-Era-EngA-EngB-Septin-like GTPase superfamily. TrmE GTPase family. As to quaternary structure, homodimer. Heterotetramer of two MnmE and two MnmG subunits. Requires K(+) as cofactor.

Its subcellular location is the cytoplasm. Its function is as follows. Exhibits a very high intrinsic GTPase hydrolysis rate. Involved in the addition of a carboxymethylaminomethyl (cmnm) group at the wobble position (U34) of certain tRNAs, forming tRNA-cmnm(5)s(2)U34. This is tRNA modification GTPase MnmE from Ehrlichia ruminantium (strain Gardel).